The following is a 340-amino-acid chain: Nucleoid-associated protein PSPA7_4451 (340 aa).

The protein belongs to the YejK family.

The protein resides in the cytoplasm. It localises to the nucleoid. The polypeptide is Nucleoid-associated protein PSPA7_4451 (Pseudomonas paraeruginosa (strain DSM 24068 / PA7) (Pseudomonas aeruginosa (strain PA7))).